The chain runs to 1054 residues: Kinesin-like protein KIN-7G (1054 aa).

One can recognise a Kinesin motor domain in the interval 17–341 (KIFVSVRLRP…LLFASCAKEV (325 aa)). 105 to 112 (GQTSSGKT) serves as a coordination point for ATP. Coiled coils occupy residues 350–425 (VMSD…IGEA) and 611–640 (TETAEEKEEKEETEEKEEEEEERVKEVSSV). Disordered regions lie at residues 600–648 (CEPE…KEKS) and 740–760 (ERAESNLKPSNSKRPPLPKHI). Acidic residues predominate over residues 613 to 631 (TAEEKEEKEETEEKEEEEE).

Belongs to the TRAFAC class myosin-kinesin ATPase superfamily. Kinesin family. KIN-7 subfamily.

The protein is Kinesin-like protein KIN-7G of Arabidopsis thaliana (Mouse-ear cress).